A 161-amino-acid chain; its full sequence is Type II secretion system protein M (161 aa).

Residues 1-16 are Cytoplasmic-facing; sequence MHNLLALWQQRTRRER. The helical transmembrane segment at 17 to 36 threads the bilayer; the sequence is CLLLGMAVVLLIGLVYYTLW. Residues 37 to 161 lie on the Periplasmic side of the membrane; sequence QPWQNREAQW…TLVLERSDEK (125 aa).

This sequence belongs to the GSP M family. Type II secretion system is composed of four main components: the outer membrane complex, the inner membrane complex, the cytoplasmic secretion ATPase and the periplasm-spanning pseudopilus. Forms homodimers. Interacts with PulL/GspL. Interacts with PulE/GspE and PulF/GspF.

The protein localises to the cell inner membrane. Inner membrane component of the type II secretion system required for the energy-dependent secretion of extracellular factors such as proteases and toxins from the periplasm. Plays a role in the complex assembly and recruits PulL resulting in a stable complex in the inner membrane. Provides thus a link between the energy-providing PulE protein in the cytoplasm and the rest of the T2SS machinery. In Klebsiella pneumoniae, this protein is Type II secretion system protein M (pulM).